We begin with the raw amino-acid sequence, 406 residues long: Tryptophan synthase beta chain (406 aa).

K99 is subject to N6-(pyridoxal phosphate)lysine.

It belongs to the TrpB family. As to quaternary structure, tetramer of two alpha and two beta chains. Pyridoxal 5'-phosphate serves as cofactor.

It carries out the reaction (1S,2R)-1-C-(indol-3-yl)glycerol 3-phosphate + L-serine = D-glyceraldehyde 3-phosphate + L-tryptophan + H2O. It functions in the pathway amino-acid biosynthesis; L-tryptophan biosynthesis; L-tryptophan from chorismate: step 5/5. The beta subunit is responsible for the synthesis of L-tryptophan from indole and L-serine. This is Tryptophan synthase beta chain from Brucella abortus (strain 2308).